We begin with the raw amino-acid sequence, 87 residues long: Acyl-CoA-binding protein (87 aa).

Ser2 is subject to N-acetylserine. The region spanning Ser2–Ile87 is the ACB domain. At Lys8 the chain carries N6-acetyllysine; alternate. An N6-succinyllysine; alternate modification is found at Lys8. Lys14 lines the an acyl-CoA pocket. Residue Lys17 is modified to N6-succinyllysine. Lys19 carries the N6-acetyllysine modification. Residue Tyr29 is modified to Phosphotyrosine. An acyl-CoA-binding positions include Tyr29–Lys33, Lys51, Lys55, and Tyr74. At Lys51 the chain carries N6-acetyllysine. Lys55 bears the N6-acetyllysine; alternate mark. Residue Lys55 is modified to N6-succinyllysine; alternate. Residue Lys55 is modified to N6-(2-hydroxyisobutyryl)lysine; alternate. Lys55 is subject to N6-malonyllysine; alternate. Residue Lys77 is modified to N6-acetyllysine; alternate. Lys77 is subject to N6-succinyllysine; alternate.

It belongs to the ACBP family. As to quaternary structure, monomer.

The protein localises to the endoplasmic reticulum. It localises to the golgi apparatus. In terms of biological role, binds medium- and long-chain acyl-CoA esters with very high affinity and may function as an intracellular carrier of acyl-CoA esters. It is also able to displace diazepam from the benzodiazepine (BZD) recognition site located on the GABA type A receptor. It is therefore possible that this protein also acts as a neuropeptide to modulate the action of the GABA receptor. The sequence is that of Acyl-CoA-binding protein (DBI) from Oryctolagus cuniculus (Rabbit).